The sequence spans 119 residues: Large ribosomal subunit protein bL19 (119 aa).

Belongs to the bacterial ribosomal protein bL19 family.

This protein is located at the 30S-50S ribosomal subunit interface and may play a role in the structure and function of the aminoacyl-tRNA binding site. The polypeptide is Large ribosomal subunit protein bL19 (Psychromonas ingrahamii (strain DSM 17664 / CCUG 51855 / 37)).